A 63-amino-acid polypeptide reads, in one-letter code: Large ribosomal subunit protein bL28 (63 aa).

This sequence belongs to the bacterial ribosomal protein bL28 family.

This is Large ribosomal subunit protein bL28 from Geobacter metallireducens (strain ATCC 53774 / DSM 7210 / GS-15).